Reading from the N-terminus, the 68-residue chain is uncharacterized protein (68 aa).

The HMA domain occupies 2-67 (KTITLNIKGI…VIEDAGFDAT (66 aa)). Residues Cys13 and Cys16 each contribute to the a metal cation site.

This is an uncharacterized protein from Haemophilus influenzae (strain ATCC 51907 / DSM 11121 / KW20 / Rd).